The sequence spans 96 residues: Co-chaperonin GroES (96 aa).

The protein belongs to the GroES chaperonin family. In terms of assembly, heptamer of 7 subunits arranged in a ring. Interacts with the chaperonin GroEL.

The protein resides in the cytoplasm. In terms of biological role, together with the chaperonin GroEL, plays an essential role in assisting protein folding. The GroEL-GroES system forms a nano-cage that allows encapsulation of the non-native substrate proteins and provides a physical environment optimized to promote and accelerate protein folding. GroES binds to the apical surface of the GroEL ring, thereby capping the opening of the GroEL channel. The sequence is that of Co-chaperonin GroES from Delftia acidovorans (strain DSM 14801 / SPH-1).